Consider the following 523-residue polypeptide: 2-isopropylmalate synthase (523 aa).

Residues 5–267 enclose the Pyruvate carboxyltransferase domain; that stretch reads VIIFDTTLRD…ETGINAKEIH (263 aa). Residues aspartate 14, histidine 202, histidine 204, and asparagine 238 each coordinate Mn(2+). A regulatory domain region spans residues 392–523; it reads ELQQLVVHSD…QQNKQEFGSV (132 aa).

It belongs to the alpha-IPM synthase/homocitrate synthase family. LeuA type 1 subfamily. In terms of assembly, homodimer. Mn(2+) serves as cofactor.

It is found in the cytoplasm. The enzyme catalyses 3-methyl-2-oxobutanoate + acetyl-CoA + H2O = (2S)-2-isopropylmalate + CoA + H(+). The protein operates within amino-acid biosynthesis; L-leucine biosynthesis; L-leucine from 3-methyl-2-oxobutanoate: step 1/4. In terms of biological role, catalyzes the condensation of the acetyl group of acetyl-CoA with 3-methyl-2-oxobutanoate (2-ketoisovalerate) to form 3-carboxy-3-hydroxy-4-methylpentanoate (2-isopropylmalate). This chain is 2-isopropylmalate synthase, found in Shewanella halifaxensis (strain HAW-EB4).